A 498-amino-acid chain; its full sequence is Myocyte-specific enhancer factor 2A (498 aa).

In terms of domain architecture, MADS-box spans 3 to 57; it reads RKKIQITRIMDERNRQVTFTKRKFGLMKKAYELSVLCDCEIALIIFNSSNKLFQY. A DNA-binding region (mef2-type) is located at residues 58–86; sequence ASTDMDKVLLKYTEYNEPHESRTNSDIVE. S59 bears the Phosphoserine; by CK2 mark. Phosphoserine occurs at positions 98 and 108. S108 carries the post-translational modification Phosphothreonine. The segment at 172 to 220 is disordered; the sequence is LADSSMLSPPPATLHRNVSPGAPQRPPSTGSASGMLSTTDLTVPNGAGN. The segment covering 198–220 has biased composition (polar residues); the sequence is PSTGSASGMLSTTDLTVPNGAGN. S233 is modified (phosphoserine). The tract at residues 240–268 is disordered; it reads TGANSLGKVMPTKSPPPPGGGSLGMNSRK. N6-acetyllysine is present on K247. S253 is modified (phosphoserine). The required for interaction with MAPKs stretch occupies residues 264–281; sequence MNSRKPDLRVVIPPSSKG. The beta domain stretch occupies residues 287-294; it reads SEEEELEL. Residues T310 and T317 each carry the phosphothreonine; by MAPK7 modification. T310 carries the phosphothreonine; by NLK modification. S353 is subject to Phosphoserine; by MAPK7. Over residues 388–400 the composition is skewed to polar residues; that stretch reads SNLSINTNQNINI. The disordered stretch occupies residues 388–498; the sequence is SNLSINTNQN…KRMRMDTWVT (111 aa). At K401 the chain carries N6-acetyllysine; alternate. K401 participates in a covalent cross-link: Glycyl lysine isopeptide (Lys-Gly) (interchain with G-Cter in SUMO); alternate. At S406 the chain carries Phosphoserine. T413 is subject to Phosphothreonine. Over residues 426–436 the composition is skewed to pro residues; that stretch reads QQPPPQPPQPQ. At S444 the chain carries Phosphoserine. Residues 444-457 show a composition bias toward low complexity; it reads SPVDSLSSSSSSYD. Composition is skewed to basic and acidic residues over residues 458 to 468 and 479 to 498; these read GSDREDPRGDF and NTED…TWVT.

Belongs to the MEF2 family. As to quaternary structure, binds DNA as a homo- or heterodimer. Dimerizes with MEF2D. Interacts with HDAC7. Interacts with PIAS1; the interaction enhances sumoylation. Interacts with HDAC4, HDAC9 and SLC2A4RG. Interacts (via the N-terminal) with MAPK7; the interaction results in the phosphorylation and transcriptional activity of MEF2A. In terms of processing, constitutive phosphorylation on Ser-406 promotes Lys-401 sumoylation thus preventing acetylation at this site. Dephosphorylation on Ser-406 by PPP3CA upon neuron depolarization promotes a switch from sumoylation to acetylation on residue Lys-403 leading to inhibition of dendrite claw differentiation. Phosphorylation on Thr-312 and Thr-319 are the main sites involved in p38 MAPK signaling and activate transcription. Phosphorylated on these sites by MAPK14/p38alpha and MAPK11/p38beta, but not by MAPK13/p38delta nor by MAPK12/p38gamma. Phosphorylation on Ser-408 by CDK5 induced by neurotoxicity inhibits MEF2A transcriptional activation leading to apoptosis of cortical neurons. Phosphorylation on Thr-312, Thr-319 and Ser-355 can be induced by EGF. Isoform 3 is phosphorylated on Ser-98 and Thr-108. Sumoylation on Lys-401 is enhanced by PIAS1 and represses transcriptional activity. Phosphorylation on Ser-406 is required for sumoylation. Has no effect on nuclear location nor on DNA binding. Sumoylated with SUMO1 and, to a lesser extent with SUMO2 and SUMO3. PIASx facilitates sumoylation in postsynaptic dendrites in the cerebellar cortex and promotes their morphogenesis. Post-translationally, acetylation on Lys-401 activates transcriptional activity. Acetylated by p300 on several sites in diffentiating myocytes. Acetylation on Lys-4 increases DNA binding and transactivation. Hyperacetylation by p300 leads to enhanced cardiac myocyte growth and heart failure. In terms of processing, proteolytically cleaved in cerebellar granule neurons on several sites by caspase 3 and caspase 7 following neurotoxicity. Preferentially cleaves the CDK5-mediated hyperphosphorylated form which leads to neuron apoptosis and transcriptional inactivation. As to expression, widely expressed though mainly restricted to skeletal and cardiac muscle, brain, neurons and lymphocytes. Differentially expressed depending on if isoforms contain the beta domain or not, with the total expression of the beta domain-lacking isoforms vastly exceeding that of the beta domain-containing isoforms. Isoforms containing the beta domain are expressed primarily in skeletal and cardiac muscle and in brain. Also present in lung and testis. Splicing to include the beta domain is induced in differentiating myocytes. Isoforms lacking the beta domain are expressed less abundantly in skeletal muscle, brain and lymphocytes, and are uniquely found in ovary, liver, spleen and kidney. In embryos, the beta domain-containing and beta domain-lacking isoforms are equally expressed. Also expressed cerebellar granule neurons and other regions of the CNS. Highest levels in the olfactory bulb, cortex, hippocampus, thalamus and cerebellum.

Its subcellular location is the nucleus. In terms of biological role, transcriptional activator which binds specifically to the MEF2 element, 5'-YTA[AT](4)TAR-3', found in numerous muscle-specific genes. Also involved in the activation of numerous growth factor- and stress-induced genes. Mediates cellular functions not only in skeletal and cardiac muscle development, but also in neuronal differentiation and survival. Plays diverse roles in the control of cell growth, survival and apoptosis via p38 MAPK signaling in muscle-specific and/or growth factor-related transcription. In cerebellar granule neurons, phosphorylated and sumoylated MEF2A represses transcription of NUR77 promoting synaptic differentiation. Associates with chromatin to the ZNF16 promoter. This is Myocyte-specific enhancer factor 2A (Mef2a) from Mus musculus (Mouse).